The primary structure comprises 29 residues: Cytochrome b6-f complex subunit 8 (29 aa).

A helical membrane pass occupies residues 3–23; sequence IISLGWSSLLVVFTFSLSLVV.

Belongs to the PetN family. As to quaternary structure, the 4 large subunits of the cytochrome b6-f complex are cytochrome b6, subunit IV (17 kDa polypeptide, PetD), cytochrome f and the Rieske protein, while the 4 small subunits are PetG, PetL, PetM and PetN. The complex functions as a dimer.

It localises to the plastid. The protein resides in the chloroplast thylakoid membrane. Functionally, component of the cytochrome b6-f complex, which mediates electron transfer between photosystem II (PSII) and photosystem I (PSI), cyclic electron flow around PSI, and state transitions. The protein is Cytochrome b6-f complex subunit 8 of Rhodomonas salina (Cryptomonas salina).